A 279-amino-acid chain; its full sequence is Tryptophan prenyltransferase ComQ (279 aa).

2 residues coordinate Mg(2+): aspartate 67 and aspartate 71.

It belongs to the FPP/GGPP synthase family. The cofactor is Mg(2+).

It is found in the cell membrane. It carries out the reaction L-tryptophyl-[protein] + (2E)-geranyl diphosphate = (2S,3R)-3-geranyl-2,3-dihydro-2,N(alpha)-cyclo-L-tryptophyl-[protein] + diphosphate. Its function is as follows. Part of a major quorum-sensing system that regulates the development of genetic competence. Involved in the maturation of the competence pheromone ComX. Acts by catalyzing the transfer of a geranyl group on the ComX pheromone. Cannot use farnesyl diphosphate (FPP). The protein is Tryptophan prenyltransferase ComQ of Bacillus spizizenii (Bacillus subtilis subsp. spizizenii).